Reading from the N-terminus, the 260-residue chain is Eukaryotic translation initiation factor 3 subunit G-2 (260 aa).

The region spanning Cys-180 to Pro-258 is the RRM domain.

This sequence belongs to the eIF-3 subunit G family. As to quaternary structure, component of the eukaryotic translation initiation factor 3 (eIF-3) complex. The eIF-3 complex interacts with pix.

Its subcellular location is the cytoplasm. Its function is as follows. RNA-binding component of the eukaryotic translation initiation factor 3 (eIF-3) complex, which is involved in protein synthesis of a specialized repertoire of mRNAs and, together with other initiation factors, stimulates binding of mRNA and methionyl-tRNAi to the 40S ribosome. The eIF-3 complex specifically targets and initiates translation of a subset of mRNAs involved in cell proliferation. This subunit can bind 18S rRNA. The sequence is that of Eukaryotic translation initiation factor 3 subunit G-2 from Drosophila grimshawi (Hawaiian fruit fly).